A 472-amino-acid chain; its full sequence is Probable dipeptidase A (472 aa).

C10 is a catalytic residue.

It belongs to the peptidase C69 family.

The enzyme catalyses an L-aminoacyl-L-amino acid + H2O = 2 an L-alpha-amino acid. The polypeptide is Probable dipeptidase A (pepDA) (Streptococcus pyogenes serotype M18 (strain MGAS8232)).